A 163-amino-acid chain; its full sequence is CASP-like protein 1C2 (163 aa).

At 1–6 (MAKSNK) the chain is on the cytoplasmic side. A helical membrane pass occupies residues 7-27 (IFTNTLRLLALAATVVAIVFM). Topologically, residues 28–52 (VTSHDSAQVLNLTFTAKYSNTPAFK) are extracellular. N38 is a glycosylation site (N-linked (GlcNAc...) asparagine). Residues 53–73 (FLVIGEAIAGGYTVISILLSF) traverse the membrane as a helical segment. Topologically, residues 74–79 (KGLFWR) are cytoplasmic. A helical membrane pass occupies residues 80–100 (LIVILDMVTTVLLTSSISAAL). Over 101 to 128 (AIAQVGKKGNTHAGWLPICGQVPDFCDY) the chain is Extracellular. The chain crosses the membrane as a helical span at residues 129-149 (VTIALIAGFAAAIIYFVLLLC). Over 150 to 163 (SLYVVLSPIFVATP) the chain is Cytoplasmic.

Belongs to the Casparian strip membrane proteins (CASP) family. Homodimer and heterodimers.

It localises to the cell membrane. This Populus trichocarpa (Western balsam poplar) protein is CASP-like protein 1C2.